A 323-amino-acid chain; its full sequence is tRNA dimethylallyltransferase (323 aa).

12–19 (GPTAAGKT) is a binding site for ATP. 14–19 (TAAGKT) is a binding site for substrate. Interaction with substrate tRNA regions lie at residues 37–40 (DSAL) and 161–165 (QRLMR).

Belongs to the IPP transferase family. As to quaternary structure, monomer. Requires Mg(2+) as cofactor.

The catalysed reaction is adenosine(37) in tRNA + dimethylallyl diphosphate = N(6)-dimethylallyladenosine(37) in tRNA + diphosphate. Its function is as follows. Catalyzes the transfer of a dimethylallyl group onto the adenine at position 37 in tRNAs that read codons beginning with uridine, leading to the formation of N6-(dimethylallyl)adenosine (i(6)A). The protein is tRNA dimethylallyltransferase of Pseudomonas paraeruginosa (strain DSM 24068 / PA7) (Pseudomonas aeruginosa (strain PA7)).